A 479-amino-acid polypeptide reads, in one-letter code: Anaerobic nitric oxide reductase flavorubredoxin (479 aa).

The segment at 30 to 210 is zinc metallo-hydrolase; sequence LRGSSYNSYL…PFSRLVTPKI (181 aa). His-79, Glu-81, Asp-83, His-147, Asp-166, and His-227 together coordinate Fe cation. The 140-residue stretch at 254–393 folds into the Flavodoxin-like domain; sequence ITIFYDTMSN…LCREHGREIA (140 aa). Residues 260-264 and 342-369 contribute to the FMN site; these read TMSNN and AFGS…EMSL. The Rubredoxin-like domain maps to 423–474; it reads GPRMQCSVCQWIYDPAKGEPMQDVAPGTPWSEVPDNFLCPECSLGKDVFDEL. Residues Cys-428, Cys-431, Cys-461, and Cys-464 each coordinate Fe cation.

It in the N-terminal section; belongs to the zinc metallo-hydrolase group 3 family. In terms of assembly, homotetramer. It depends on Fe cation as a cofactor. FMN is required as a cofactor.

The protein resides in the cytoplasm. It functions in the pathway nitrogen metabolism; nitric oxide reduction. Anaerobic nitric oxide reductase; uses NADH to detoxify nitric oxide (NO), protecting several 4Fe-4S NO-sensitive enzymes. Has at least 2 reductase partners, only one of which (NorW, flavorubredoxin reductase) has been identified. NO probably binds to the di-iron center; electrons enter from the NorW at rubredoxin and are transferred sequentially to the FMN center and the di-iron center. Also able to function as an aerobic oxygen reductase. The sequence is that of Anaerobic nitric oxide reductase flavorubredoxin from Escherichia coli O6:H1 (strain CFT073 / ATCC 700928 / UPEC).